A 908-amino-acid polypeptide reads, in one-letter code: 26S proteasome non-ATPase regulatory subunit 2 (908 aa).

Residue methionine 1 is modified to N-acetylmethionine. A disordered region spans residues 1–52 (MEEGGRDKAPVQPQQSPAAALGGTDEKPSGKERRDAGDKDKEQELSEEDKQL). Residues 10–20 (PVQPQQSPAAA) show a composition bias toward low complexity. Phosphoserine is present on serine 16. Threonine 24 carries the post-translational modification Phosphothreonine. Residues 24–52 (TDEKPSGKERRDAGDKDKEQELSEEDKQL) are compositionally biased toward basic and acidic residues. Residues serine 29 and serine 147 each carry the phosphoserine modification. The residue at position 194 (tyrosine 194) is a Phosphotyrosine. Phosphoserine occurs at positions 361 and 363. PC repeat units lie at residues 409-442 (SAAA…YIKS), 443-479 (GALL…TMRL), 480-514 (GSIF…SMEV), 517-551 (VTAL…TELK), and 560-589 (LGLG…PFRS). At lysine 551 the chain carries N6-acetyllysine. The segment covering 623 to 643 (KEKEEDKDKKEKKDKDKKEAP) has biased composition (basic and acidic residues). Residues 623–645 (KEKEEDKDKKEKKDKDKKEAPAD) are disordered. PC repeat units lie at residues 692-723 (LALA…EVSY) and 742-757 (AAML…KDPN). Positions 708–903 (DTLSKFSHDA…LEGFVILRKN (196 aa)) are required for interaction with UBLCP1.

Belongs to the proteasome subunit S2 family. Component of the 19S proteasome regulatory particle complex. The 26S proteasome consists of a 20S core particle (CP) and two 19S regulatory subunits (RP). The regulatory particle is made of a lid composed of 9 subunits, a base containing 6 ATPases and few additional components including PSMD2. Interacts with RPGRIP1L. Interacts with CRY1 in a KDM8-dependent manner. Interacts (via C-terminus) with phosphatase UBLCP1 (via ubiquitin-like domain); the interaction recruits UBLCP1 to the 19S regulatory particle where it dephosphorylates 19S subunit PSMC2/RPT1 which impairs PSMC2 ATPase activity and disrupts 26S proteasome assembly.

Component of the 26S proteasome, a multiprotein complex involved in the ATP-dependent degradation of ubiquitinated proteins. This complex plays a key role in the maintenance of protein homeostasis by removing misfolded or damaged proteins, which could impair cellular functions, and by removing proteins whose functions are no longer required. Therefore, the proteasome participates in numerous cellular processes, including cell cycle progression, apoptosis, or DNA damage repair. Functionally, binds to the intracellular domain of tumor necrosis factor type 1 receptor. The binding domain of TRAP1 and TRAP2 resides outside the death domain of TNFR1. This Pongo abelii (Sumatran orangutan) protein is 26S proteasome non-ATPase regulatory subunit 2 (PSMD2).